The chain runs to 441 residues: tRNA pseudouridine synthase Pus10 (441 aa).

D268 acts as the Nucleophile in catalysis. Substrate is bound by residues Y333 and Y405.

This sequence belongs to the pseudouridine synthase Pus10 family.

It catalyses the reaction uridine(54) in tRNA = pseudouridine(54) in tRNA. The enzyme catalyses uridine(55) in tRNA = pseudouridine(55) in tRNA. In terms of biological role, responsible for synthesis of pseudouridine from uracil-54 and uracil-55 in the psi GC loop of transfer RNAs. This is tRNA pseudouridine synthase Pus10 from Thermosphaera aggregans (strain DSM 11486 / M11TL).